The sequence spans 72 residues: Translation initiation factor IF-1 (72 aa).

The S1-like domain maps to 2-72 (AKEDVIEIQG…TKGRITYRFK (71 aa)).

The protein belongs to the IF-1 family. Component of the 30S ribosomal translation pre-initiation complex which assembles on the 30S ribosome in the order IF-2 and IF-3, IF-1 and N-formylmethionyl-tRNA(fMet); mRNA recruitment can occur at any time during PIC assembly.

Its subcellular location is the cytoplasm. One of the essential components for the initiation of protein synthesis. Stabilizes the binding of IF-2 and IF-3 on the 30S subunit to which N-formylmethionyl-tRNA(fMet) subsequently binds. Helps modulate mRNA selection, yielding the 30S pre-initiation complex (PIC). Upon addition of the 50S ribosomal subunit IF-1, IF-2 and IF-3 are released leaving the mature 70S translation initiation complex. The chain is Translation initiation factor IF-1 from Lactiplantibacillus plantarum (strain ATCC BAA-793 / NCIMB 8826 / WCFS1) (Lactobacillus plantarum).